The following is a 945-amino-acid chain: Leucine--tRNA ligase (945 aa).

Positions 43-53 (PYPNGAIHIGH) match the 'HIGH' region motif. Residues 638–642 (KMSKS) carry the 'KMSKS' region motif. An ATP-binding site is contributed by lysine 641.

Belongs to the class-I aminoacyl-tRNA synthetase family.

The protein resides in the cytoplasm. The enzyme catalyses tRNA(Leu) + L-leucine + ATP = L-leucyl-tRNA(Leu) + AMP + diphosphate. In Pyrobaculum arsenaticum (strain DSM 13514 / JCM 11321 / PZ6), this protein is Leucine--tRNA ligase.